A 590-amino-acid chain; its full sequence is Aspartate--tRNA(Asp/Asn) ligase (590 aa).

E175 lines the L-aspartate pocket. Positions 199–202 (QQYK) are aspartate. Positions 221 and 450 each coordinate L-aspartate. An ATP-binding site is contributed by 221–223 (RDE). Residue E484 coordinates ATP. An L-aspartate-binding site is contributed by R491. 536–539 (GVDR) is an ATP binding site.

Belongs to the class-II aminoacyl-tRNA synthetase family. Type 1 subfamily. Homodimer.

It is found in the cytoplasm. It catalyses the reaction tRNA(Asx) + L-aspartate + ATP = L-aspartyl-tRNA(Asx) + AMP + diphosphate. Its function is as follows. Aspartyl-tRNA synthetase with relaxed tRNA specificity since it is able to aspartylate not only its cognate tRNA(Asp) but also tRNA(Asn). Reaction proceeds in two steps: L-aspartate is first activated by ATP to form Asp-AMP and then transferred to the acceptor end of tRNA(Asp/Asn). The chain is Aspartate--tRNA(Asp/Asn) ligase from Rhodopseudomonas palustris (strain BisB18).